The following is a 284-amino-acid chain: Polyamine aminopropyltransferase (284 aa).

A PABS domain is found at 2-237; it reads ELWYTEQHTE…GHWLFGFASK (236 aa). Gln-31 provides a ligand contact to S-methyl-5'-thioadenosine. 2 residues coordinate spermidine: His-62 and Asp-86. Residues Glu-106 and 137-138 each bind S-methyl-5'-thioadenosine; that span reads DG. Residue Asp-155 is the Proton acceptor of the active site. Residue 155 to 158 participates in spermidine binding; sequence DSTD. Position 162 (Pro-162) interacts with S-methyl-5'-thioadenosine.

This sequence belongs to the spermidine/spermine synthase family. Homodimer or homotetramer.

The protein resides in the cytoplasm. It carries out the reaction S-adenosyl 3-(methylsulfanyl)propylamine + putrescine = S-methyl-5'-thioadenosine + spermidine + H(+). It functions in the pathway amine and polyamine biosynthesis; spermidine biosynthesis; spermidine from putrescine: step 1/1. Functionally, catalyzes the irreversible transfer of a propylamine group from the amino donor S-adenosylmethioninamine (decarboxy-AdoMet) to putrescine (1,4-diaminobutane) to yield spermidine. The protein is Polyamine aminopropyltransferase of Alkaliphilus oremlandii (strain OhILAs) (Clostridium oremlandii (strain OhILAs)).